A 698-amino-acid polypeptide reads, in one-letter code: UvrABC system protein B (698 aa).

Positions 35 to 210 (ARLQAGEKDI…TFRVRGDTVE (176 aa)) constitute a Helicase ATP-binding domain. 48–55 (GATGTGKS) contributes to the ATP binding site. The Beta-hairpin motif lies at 101-124 (YYDYYQPEAYVPSSDTYIEKDSSI). The 167-residue stretch at 438–604 (QIDDLLAEIN…PLRKRIGDIT (167 aa)) folds into the Helicase C-terminal domain. In terms of domain architecture, UVR spans 654-689 (AELIQELTDQMHVAAGELQFEVAARLRDEISDLKKE).

This sequence belongs to the UvrB family. Forms a heterotetramer with UvrA during the search for lesions. Interacts with UvrC in an incision complex.

Its subcellular location is the cytoplasm. Its function is as follows. The UvrABC repair system catalyzes the recognition and processing of DNA lesions. A damage recognition complex composed of 2 UvrA and 2 UvrB subunits scans DNA for abnormalities. Upon binding of the UvrA(2)B(2) complex to a putative damaged site, the DNA wraps around one UvrB monomer. DNA wrap is dependent on ATP binding by UvrB and probably causes local melting of the DNA helix, facilitating insertion of UvrB beta-hairpin between the DNA strands. Then UvrB probes one DNA strand for the presence of a lesion. If a lesion is found the UvrA subunits dissociate and the UvrB-DNA preincision complex is formed. This complex is subsequently bound by UvrC and the second UvrB is released. If no lesion is found, the DNA wraps around the other UvrB subunit that will check the other stand for damage. The protein is UvrABC system protein B of Beutenbergia cavernae (strain ATCC BAA-8 / DSM 12333 / CCUG 43141 / JCM 11478 / NBRC 16432 / NCIMB 13614 / HKI 0122).